The chain runs to 262 residues: Dimeric xanthone biosynthesis cluster protein R11 (262 aa).

Residues 69–160 are hemerythrin-like; that stretch reads IADLLFYTKT…PQLFKHLNDE (92 aa).

The protein operates within secondary metabolite biosynthesis. Functionally, part of the gene cluster that mediates the biosynthesis of the dimeric xanthones cryptosporioptides. The pathway begins with the synthesis of atrochrysone thioester by the polyketide synthase dmx-nrPKS. The atrochrysone carboxyl ACP thioesterase dmxR1 then breaks the thioester bond and releases the atrochrysone carboxylic acid from dmx-nrPKS. Atrochrysone carboxylic acid is decarboxylated by the decarboxylase dmxR15, and oxidized by the anthrone oxygenase dmxR16 to yield emodin. Emodin is then reduced to emodin hydroquinone by the oxidoreductase dmxR7. A-ring reduction by the short chain dehydrogenase dmxR18, dehydration by the scytalone dehydratase-like protein dmxR17 and probable spontaneous re-oxidation, results in overall deoxygenation to chrysophanol. Baeyer-Villiger oxidation by the Baeyer-Villiger monooxygenase (BVMO) dmxR6 then yields monodictylactone in equilibrium with monodictyphenone. In the case of the cryptosporioptides biosynthesis, monodictylactone is reduced at C-12 to an alcohol (by the short chain dehydrogenases dmxR12 or dmxR8) and hydroxylated at C-5 by dmxR9, yielding the electron-rich aromatic which could eliminate H(2)O to form the ortho-quinonemethide, followed by tautomerisation to paraquinone and complete the formal reduction to produce the 10-methylgroup. Conjugate addition of C-4a-OH to the resulting paraquinone by the monooxygenase dmxR10 then gives cyclohexadienone, which is then reduced at C-5 by the short chain dehydrogenase dmxR3 to give the dihydroxanthone. The 6,7-epoxide in the cryptosporioptides could be introduced by the cytochrome P450 monooxygenase dmxL3. The highly reducing PKS dmxL2 manufactures butyrate, which is further carboxylated by dmxL1 to form ethylmalonate. It is not yet clear whether the carboxylation occurs while the butyrate is attached to the ACP of dmxL2, but this unusual fungal metabolite could then be esterified to O-5 by the O-acetyltransferase dmxR13. Finally, dimerization performed by dmxR5 gives the observed dimers cryptosporioptides A, B and C as the final products of the pathway. This Cryptosporiopsis sp. (strain 8999) protein is Dimeric xanthone biosynthesis cluster protein R11.